We begin with the raw amino-acid sequence, 394 residues long: Uroporphyrinogen decarboxylase 2, chloroplastic (394 aa).

Residues Arg-74–Arg-78, Phe-93, Ser-123, Asp-124, Tyr-201, Ser-256, and His-371 each bind substrate.

It belongs to the uroporphyrinogen decarboxylase family. In terms of assembly, homodimer.

It is found in the plastid. Its subcellular location is the chloroplast. The enzyme catalyses uroporphyrinogen III + 4 H(+) = coproporphyrinogen III + 4 CO2. It functions in the pathway porphyrin-containing compound metabolism; protoporphyrin-IX biosynthesis; coproporphyrinogen-III from 5-aminolevulinate: step 4/4. It participates in porphyrin-containing compound metabolism; chlorophyll biosynthesis. Functionally, catalyzes the decarboxylation of four acetate groups of uroporphyrinogen-III to yield coproporphyrinogen-III. This chain is Uroporphyrinogen decarboxylase 2, chloroplastic (HEME2), found in Arabidopsis thaliana (Mouse-ear cress).